Consider the following 181-residue polypeptide: ADP-ribosylation factor 1 (181 aa).

The N-myristoyl glycine moiety is linked to residue glycine 2. Residues 24-31 (GLDAAGKT), 126-129 (NKQD), and alanine 160 contribute to the GTP site.

The protein belongs to the small GTPase superfamily. Arf family. As to quaternary structure, may interact with GTPase RAB5b.

The protein resides in the golgi apparatus membrane. It catalyses the reaction GTP + H2O = GDP + phosphate + H(+). Its activity is regulated as follows. Alternates between an inactive GDP-bound form and an active GTP-bound form. Intrinsic GTPase activity is almost undetectable in vitro. Activated by a guanine nucleotide-exchange factor (GEF) and inactivated by GTPase-activating protein ARFGAP1. Functionally, small GTPase involved in protein trafficking between different compartments. Modulates vesicle budding and uncoating within the Golgi complex. In its GTP-bound form, triggers the recruitment of coatomer proteins to the Golgi membrane. The hydrolysis of ARF1-bound GTP, which is mediated by ARFGAPs proteins, is required for dissociation of coat proteins from Golgi membranes and vesicles. Regulates the transport of N-acylated AK2 to the parasitophorous vacuole membrane. May be involved in the activation of lipid kinase PIP5K. The protein is ADP-ribosylation factor 1 (ARF1) of Plasmodium falciparum (isolate NF54).